A 479-amino-acid chain; its full sequence is Endosomal/lysosomal proton channel TMEM175 (479 aa).

Positions methionine 1 to alanine 26 are disordered. The Cytoplasmic portion of the chain corresponds to methionine 1 to serine 33. Residues histidine 34–serine 56 traverse the membrane as a helical segment. The short motif at arginine 35–aspartate 41 is the RxxxFSD motif 1 element. The segment at glutamate 52–glutamine 58 is short helix H2-1. Over valine 57–arginine 64 the chain is Lumenal. Residues isoleucine 65 to glutamine 87 form a helical membrane-spanning segment. Over valine 88–aspartate 93 the chain is Cytoplasmic. A helical membrane pass occupies residues aspartate 94–serine 103. At leucine 104–leucine 113 the chain is on the lumenal side. Residues glycine 114–tyrosine 135 traverse the membrane as a helical segment. Residues alanine 136–arginine 159 lie on the Cytoplasmic side of the membrane. A helical membrane pass occupies residues valine 160 to phenylalanine 180. The Lumenal portion of the chain corresponds to phenylalanine 181–serine 185. The helical transmembrane segment at tyrosine 186–cysteine 205 threads the bilayer. Over arginine 206–serine 232 the chain is Cytoplasmic. Residues lysine 233–glutamate 257 form a helical membrane-spanning segment. A RxxxFSD motif 2 motif is present at residues arginine 235 to aspartate 241. The Lumenal segment spans residues aspartate 258–histidine 284. The tract at residues alanine 263–glutamine 271 is short helix H1-2. The segment at serine 273–glycine 279 is short helix H2-2. A helical membrane pass occupies residues phenylalanine 285–leucine 307. Topologically, residues histidine 308–threonine 313 are cytoplasmic. Residues glutamine 314–glutamine 335 form a helical membrane-spanning segment. The Lumenal portion of the chain corresponds to glutamine 336–serine 350. The helical transmembrane segment at valine 351–threonine 371 threads the bilayer. At alanine 372–histidine 391 the chain is on the cytoplasmic side. Residues alanine 392–leucine 415 traverse the membrane as a helical segment. Over serine 416–serine 417 the chain is Lumenal. Residues phenylalanine 418–alanine 444 traverse the membrane as a helical segment. Residues leucine 445 to cysteine 479 lie on the Cytoplasmic side of the membrane.

This sequence belongs to the TMEM175 family. In terms of assembly, homodimer. Interacts with AKT (AKT1, AKT2 or AKT3); leading to formation of the lysoK(GF) complex, which activates the channel. Interacts with LAMP1; inhibiting the proton channel activity of TMEM175. Interacts with LAMP2; inhibiting the proton channel activity of TMEM175.

It is found in the endosome membrane. The protein localises to the lysosome membrane. The catalysed reaction is H(+)(in) = H(+)(out). The enzyme catalyses K(+)(in) = K(+)(out). Its activity is regulated as follows. Active at low pH (under pH 4.6): proton channel activity is activated by luminal side protons. Polyunsaturated fatty acids, such as arachidonic acid, also activate the channel activity. Proton channel activity is directly inhibited by LAMP1 or LAMP2, facilitating lysosomal acidification. Channel activity is activated following interaction with AKT (AKT1, AKT2 or AKT3): interaction promotes activation from closed to an open state. Activation by AKT is independent of AKT serine/threonine-protein kinase activity. Proton-activated proton channel that catalyzes proton efflux from endosomes and lysosomes to maintain a steady-state pH. Activated at low pH (under pH 4.6) by luminal side protons: selectively mediates lysosomal proton release from lysosomes, eliciting a proton leak that balances V-ATPase activity to maintain pH homeostasis. Regulation of lumenal pH stability is required for autophagosome-lysosome fusion. Also acts as a potassium channel at higher pH, regulating potassium conductance in endosomes and lysosomes. Constitutes the pore-forming subunit of the lysoK(GF) complex, a complex activated by extracellular growth factors. The lysoK(GF) complex is composed of TMEM175 and AKT (AKT1, AKT2 or AKT3), a major target of growth factor receptors: in the complex, TMEM175 channel is opened by conformational changes by AKT, leading to its activation. The lysoK(GF) complex is required to protect neurons against stress-induced damage. This is Endosomal/lysosomal proton channel TMEM175 from Bos taurus (Bovine).